A 363-amino-acid chain; its full sequence is Mitochondrial RNA-splicing protein MRS1 (363 aa).

As to quaternary structure, homodimer. Forms a ribonucleoprotein complex composed of maturase bI3 and 2 dimers of MRS1 that assemble around the bI3 RNA.

It is found in the mitochondrion matrix. Its function is as follows. Function in mitochondrial RNA splicing in the excision of mitochondrial group I introns aI5 beta from COX1 and bI3 from COB transcripts and thus would be involved in obtaining the correct structure of the intron, to allow the RNA catalyzed reactions to occur. The polypeptide is Mitochondrial RNA-splicing protein MRS1 (MRS1) (Saccharomyces cerevisiae (strain ATCC 204508 / S288c) (Baker's yeast)).